Here is a 364-residue protein sequence, read N- to C-terminus: Uroporphyrinogen decarboxylase (364 aa).

Substrate is bound by residues 28–32, Phe47, Asp78, Tyr158, Thr213, and His334; that span reads RQAGR.

This sequence belongs to the uroporphyrinogen decarboxylase family. Homodimer.

It localises to the cytoplasm. It catalyses the reaction uroporphyrinogen III + 4 H(+) = coproporphyrinogen III + 4 CO2. The protein operates within porphyrin-containing compound metabolism; protoporphyrin-IX biosynthesis; coproporphyrinogen-III from 5-aminolevulinate: step 4/4. Its function is as follows. Catalyzes the decarboxylation of four acetate groups of uroporphyrinogen-III to yield coproporphyrinogen-III. This is Uroporphyrinogen decarboxylase from Ralstonia nicotianae (strain ATCC BAA-1114 / GMI1000) (Ralstonia solanacearum).